The primary structure comprises 267 residues: Mediator of RNA polymerase II transcription subunit 8 (267 aa).

2 coiled-coil regions span residues 1 to 26 (MQRE…KNSL) and 116 to 160 (DVEE…EERE). Residues 190–267 (GLSNRRPPGQ…KSASMHPYQR (78 aa)) form a disordered region. Positions 227–245 (PPNQQQQHMAGVSMSQGSQ) are enriched in polar residues.

It belongs to the Mediator complex subunit 8 family. In terms of assembly, component of the Mediator complex. May be part of a multisubunit E3 ubiquitin-protein ligase complex.

It localises to the nucleus. Its pathway is protein modification; protein ubiquitination. Component of the Mediator complex, a coactivator involved in the regulated transcription of nearly all RNA polymerase II-dependent genes. Mediator functions as a bridge to convey information from gene-specific regulatory proteins to the basal RNA polymerase II transcription machinery. Mediator is recruited to promoters by direct interactions with regulatory proteins and serves as a scaffold for the assembly of a functional preinitiation complex with RNA polymerase II and the general transcription factors. May play a role as a target recruitment subunit in E3 ubiquitin-protein ligase complexes and thus in ubiquitination and subsequent proteasomal degradation of target proteins. The sequence is that of Mediator of RNA polymerase II transcription subunit 8 (med8) from Xenopus tropicalis (Western clawed frog).